A 163-amino-acid chain; its full sequence is Flagellar assembly factor FliW (163 aa).

Residues 136–156 (PFFETSEKKQSGLQRLERQPE) show a composition bias toward basic and acidic residues. A disordered region spans residues 136–163 (PFFETSEKKQSGLQRLERQPEKSVPPAG).

This sequence belongs to the FliW family. In terms of assembly, interacts with translational regulator CsrA and flagellin(s).

The protein localises to the cytoplasm. In terms of biological role, acts as an anti-CsrA protein, binds CsrA and prevents it from repressing translation of its target genes, one of which is flagellin. Binds to flagellin and participates in the assembly of the flagellum. The sequence is that of Flagellar assembly factor FliW from Geotalea uraniireducens (strain Rf4) (Geobacter uraniireducens).